The primary structure comprises 146 residues: Hemoglobin subunit beta-1 (146 aa).

The Globin domain maps to glutamate 2–histidine 146. Positions 63 and 92 each coordinate heme b.

This sequence belongs to the globin family. Hb 1 is a heterotetramer of two alpha-1 and two beta-1 chains. In terms of tissue distribution, red blood cells.

Its function is as follows. Involved in oxygen transport from gills to the various peripheral tissues. This Gobionotothen gibberifrons (Humped rockcod) protein is Hemoglobin subunit beta-1 (hbb1).